The chain runs to 99 residues: NAD(P)H-quinone oxidoreductase subunit 4L, chloroplastic (99 aa).

A run of 3 helical transmembrane segments spans residues 1–21 (MFEQ…FGLI), 31–51 (MSLE…SNLF), and 59–79 (IFTL…LAIA).

It belongs to the complex I subunit 4L family. In terms of assembly, NDH is composed of at least 16 different subunits, 5 of which are encoded in the nucleus.

The protein localises to the plastid. It localises to the chloroplast thylakoid membrane. It catalyses the reaction a plastoquinone + NADH + (n+1) H(+)(in) = a plastoquinol + NAD(+) + n H(+)(out). The catalysed reaction is a plastoquinone + NADPH + (n+1) H(+)(in) = a plastoquinol + NADP(+) + n H(+)(out). In terms of biological role, NDH shuttles electrons from NAD(P)H:plastoquinone, via FMN and iron-sulfur (Fe-S) centers, to quinones in the photosynthetic chain and possibly in a chloroplast respiratory chain. The immediate electron acceptor for the enzyme in this species is believed to be plastoquinone. Couples the redox reaction to proton translocation, and thus conserves the redox energy in a proton gradient. This Adiantum capillus-veneris (Maidenhair fern) protein is NAD(P)H-quinone oxidoreductase subunit 4L, chloroplastic.